Consider the following 158-residue polypeptide: Transcription elongation factor GreA (158 aa).

Residues 45 to 72 (AEYHAAREQQSFIEGRIKQLEGELSHAE) are a coiled coil.

Belongs to the GreA/GreB family.

Functionally, necessary for efficient RNA polymerase transcription elongation past template-encoded arresting sites. The arresting sites in DNA have the property of trapping a certain fraction of elongating RNA polymerases that pass through, resulting in locked ternary complexes. Cleavage of the nascent transcript by cleavage factors such as GreA or GreB allows the resumption of elongation from the new 3'terminus. GreA releases sequences of 2 to 3 nucleotides. This is Transcription elongation factor GreA from Xylella fastidiosa (strain 9a5c).